The following is a 171-amino-acid chain: 3-hydroxydecanoyl-[acyl-carrier-protein] dehydratase (171 aa).

H70 is a catalytic residue.

This sequence belongs to the thioester dehydratase family. FabA subfamily. As to quaternary structure, homodimer.

It is found in the cytoplasm. It catalyses the reaction a (3R)-hydroxyacyl-[ACP] = a (2E)-enoyl-[ACP] + H2O. The catalysed reaction is (3R)-hydroxydecanoyl-[ACP] = (2E)-decenoyl-[ACP] + H2O. The enzyme catalyses (2E)-decenoyl-[ACP] = (3Z)-decenoyl-[ACP]. The protein operates within lipid metabolism; fatty acid biosynthesis. Necessary for the introduction of cis unsaturation into fatty acids. Catalyzes the dehydration of (3R)-3-hydroxydecanoyl-ACP to E-(2)-decenoyl-ACP and then its isomerization to Z-(3)-decenoyl-ACP. Can catalyze the dehydratase reaction for beta-hydroxyacyl-ACPs with saturated chain lengths up to 16:0, being most active on intermediate chain length. This chain is 3-hydroxydecanoyl-[acyl-carrier-protein] dehydratase, found in Pseudomonas fluorescens (strain ATCC BAA-477 / NRRL B-23932 / Pf-5).